A 446-amino-acid polypeptide reads, in one-letter code: Histidinol dehydrogenase homolog (446 aa).

Zn(2+) is bound at residue His266. Residues Glu334 and His335 each act as proton acceptor in the active site. Position 427 (His427) interacts with Zn(2+).

The protein belongs to the histidinol dehydrogenase family. Requires Zn(2+) as cofactor.

This Colwellia psychrerythraea (strain 34H / ATCC BAA-681) (Vibrio psychroerythus) protein is Histidinol dehydrogenase homolog.